The primary structure comprises 256 residues: Ribosomal RNA large subunit methyltransferase E (256 aa).

S-adenosyl-L-methionine is bound by residues G48, W50, D68, D86, and D111. K151 functions as the Proton acceptor in the catalytic mechanism. The region spanning 198 to 256 (PVSPGDELDATVVDIGSEGDGIIKIDGYTLFVPGVENGDSVRVRVTDLKSNVGFAEVIE) is the TRAM domain.

The protein belongs to the class I-like SAM-binding methyltransferase superfamily. RNA methyltransferase RlmE family.

The protein resides in the cytoplasm. The catalysed reaction is uridine(2552) in 23S rRNA + S-adenosyl-L-methionine = 2'-O-methyluridine(2552) in 23S rRNA + S-adenosyl-L-homocysteine + H(+). Specifically methylates the uridine in position 2552 of 23S rRNA at the 2'-O position of the ribose in the fully assembled 50S ribosomal subunit. The protein is Ribosomal RNA large subunit methyltransferase E of Haloquadratum walsbyi (strain DSM 16790 / HBSQ001).